A 101-amino-acid chain; its full sequence is MMLEHVLVLSSYLLSIGIYGLITSRNMVRALMCLELILNAVNINFVTFSDLFDNRQLKGDIFSIFVIGIAAAEAAIGLAIISAIHRNRKSTRINQSNLLNK.

The next 3 membrane-spanning stretches (helical) occupy residues 2–22 (MLEHVLVLSSYLLSIGIYGLI), 32–52 (MCLELILNAVNINFVTFSDLF), and 61–81 (IFSIFVIGIAAAEAAIGLAII).

This sequence belongs to the complex I subunit 4L family. As to quaternary structure, NDH is composed of at least 16 different subunits, 5 of which are encoded in the nucleus.

The protein localises to the plastid. It is found in the chloroplast thylakoid membrane. The catalysed reaction is a plastoquinone + NADH + (n+1) H(+)(in) = a plastoquinol + NAD(+) + n H(+)(out). The enzyme catalyses a plastoquinone + NADPH + (n+1) H(+)(in) = a plastoquinol + NADP(+) + n H(+)(out). Functionally, NDH shuttles electrons from NAD(P)H:plastoquinone, via FMN and iron-sulfur (Fe-S) centers, to quinones in the photosynthetic chain and possibly in a chloroplast respiratory chain. The immediate electron acceptor for the enzyme in this species is believed to be plastoquinone. Couples the redox reaction to proton translocation, and thus conserves the redox energy in a proton gradient. The protein is NAD(P)H-quinone oxidoreductase subunit 4L, chloroplastic of Ranunculus macranthus (Large buttercup).